A 1019-amino-acid chain; its full sequence is Photoactivated adenylate cyclase subunit alpha (1019 aa).

In terms of domain architecture, BLUF 1 spans 55-148 (LRRLMYLSAS…GRMYGEWHMK (94 aa)). A Guanylate cyclase 1 domain is found at 204–332 (VVTFIYLVEF…DCINTASRIT (129 aa)). The 93-residue stretch at 467–559 (LITLTYISQA…RVYGSPLDMT (93 aa)) folds into the BLUF 2 domain. The 130-residue stretch at 615–744 (VMLATDICSF…EVSARVMEVE (130 aa)) folds into the Guanylate cyclase 2 domain. Residues 822 to 861 (GTNAPGRGAPAGGIPSSPKVRPPGRTNSVSSYTPDPNEAL) form a disordered region. Over residues 825 to 839 (APGRGAPAGGIPSSP) the composition is skewed to low complexity. The span at 846–855 (RTNSVSSYTP) shows a compositional bias: polar residues.

This sequence belongs to the adenylyl cyclase class-4/guanylyl cyclase family. As to quaternary structure, heterotetramer of two alpha and two beta subunits. FAD is required as a cofactor.

The protein resides in the cell projection. Its subcellular location is the cilium. It localises to the flagellum. The catalysed reaction is ATP = 3',5'-cyclic AMP + diphosphate. With respect to regulation, activity increased by up to 80-fold under blue light. Its function is as follows. Acts as a blue light photoreceptor for the step-up photophobic response. Mediates photoavoidance. This is Photoactivated adenylate cyclase subunit alpha from Euglena gracilis.